The primary structure comprises 423 residues: Glycine amidinotransferase, mitochondrial (423 aa).

Residues 1 to 43 constitute a mitochondrion transit peptide; that stretch reads MLRVRCLRGGSRGAEALHYIGSRLGRTVTGWVQRTFQSTQAAT. Serine 46 and serine 49 each carry phosphoserine. Aspartate 170 provides a ligand contact to arginine. Active-site residues include aspartate 254 and histidine 303. Arginine is bound by residues aspartate 305, arginine 322, serine 354, and serine 355. Lysine 385 carries the post-translational modification N6-acetyllysine. Cysteine 407 acts as the Amidino-cysteine intermediate in catalysis.

It belongs to the amidinotransferase family. In terms of assembly, homodimer. Kidney. Expressed biallelically in placenta.

The protein resides in the mitochondrion inner membrane. It carries out the reaction L-arginine + glycine = guanidinoacetate + L-ornithine. The catalysed reaction is 4-aminobutanoate + L-arginine = 4-guanidinobutanoate + L-ornithine. The enzyme catalyses beta-alanine + L-arginine = 3-guanidinopropanoate + L-ornithine. It catalyses the reaction taurine + L-arginine = taurocyamine + L-ornithine. Its pathway is amine and polyamine biosynthesis; creatine biosynthesis; creatine from L-arginine and glycine: step 1/2. Transamidinase that catalyzes the transfer of the amidino group of L-arginine onto the amino moiety of acceptor metabolites such as glycine, beta-alanine, gamma-aminobutyric acid (GABA) and taurine yielding the corresponding guanidine derivatives. Catalyzes the rate-limiting step of creatine biosynthesis, namely the transfer of the amidino group from L-arginine to glycine to generate guanidinoacetate, which is then methylated by GAMT to form creatine. Provides creatine as a source for ATP generation in tissues with high energy demands, in particular skeletal muscle, heart and brain. This chain is Glycine amidinotransferase, mitochondrial (GATM), found in Sus scrofa (Pig).